The chain runs to 331 residues: uncharacterized protein (331 aa).

Belongs to the proline racemase family.

This is an uncharacterized protein from Bacillus anthracis.